The primary structure comprises 217 residues: 8-oxoguanine DNA glycosylase/AP lyase (217 aa).

Residues K138 and D157 contribute to the active site.

Belongs to the type-2 OGG1 family.

The enzyme catalyses 2'-deoxyribonucleotide-(2'-deoxyribose 5'-phosphate)-2'-deoxyribonucleotide-DNA = a 3'-end 2'-deoxyribonucleotide-(2,3-dehydro-2,3-deoxyribose 5'-phosphate)-DNA + a 5'-end 5'-phospho-2'-deoxyribonucleoside-DNA + H(+). Catalyzes the excision of an oxidatively damaged form of guanine (7,8-dihydro-8-oxoguanine = 8-oxoG) from DNA. Also cleaves the DNA backbone at apurinic/apyrimidinic sites (AP sites). This chain is 8-oxoguanine DNA glycosylase/AP lyase, found in Fusobacterium nucleatum subsp. nucleatum (strain ATCC 25586 / DSM 15643 / BCRC 10681 / CIP 101130 / JCM 8532 / KCTC 2640 / LMG 13131 / VPI 4355).